The sequence spans 196 residues: Dephospho-CoA kinase (196 aa).

A DPCK domain is found at 6-196 (AIALTGGIGT…QVERFLKTLL (191 aa)). 14–19 (GTGKST) serves as a coordination point for ATP.

Belongs to the CoaE family.

It localises to the cytoplasm. It catalyses the reaction 3'-dephospho-CoA + ATP = ADP + CoA + H(+). The protein operates within cofactor biosynthesis; coenzyme A biosynthesis; CoA from (R)-pantothenate: step 5/5. Catalyzes the phosphorylation of the 3'-hydroxyl group of dephosphocoenzyme A to form coenzyme A. This chain is Dephospho-CoA kinase, found in Helicobacter pylori (strain ATCC 700392 / 26695) (Campylobacter pylori).